Consider the following 590-residue polypeptide: Cyclin-dependent kinase-like 3 (590 aa).

The 283-residue stretch at 4–286 (YETLGKVGEG…SSDLLHHEYF (283 aa)) folds into the Protein kinase domain. Residues 10-18 (VGEGSYGTV) and Lys-33 each bind ATP. Positions 45–51 (KIAMREI) match the [NKR]KIAxRE motif. Catalysis depends on Asp-125, which acts as the Proton acceptor. Thr-158 carries the phosphothreonine modification. At Tyr-160 the chain carries Phosphotyrosine. Disordered stretches follow at residues 459–508 (RAKK…SNEN) and 547–590 (LKRE…PDVE). A compositionally biased stretch (polar residues) spans 466–477 (SSQSIGQVMPNS). 2 stretches are compositionally biased toward basic and acidic residues: residues 547 to 556 (LKRESKKTDS) and 580 to 590 (TERKKNLPDVE).

The protein belongs to the protein kinase superfamily. CMGC Ser/Thr protein kinase family. CDC2/CDKX subfamily.

It is found in the cytoplasm. It carries out the reaction L-seryl-[protein] + ATP = O-phospho-L-seryl-[protein] + ADP + H(+). It catalyses the reaction L-threonyl-[protein] + ATP = O-phospho-L-threonyl-[protein] + ADP + H(+). The chain is Cyclin-dependent kinase-like 3 from Macaca fascicularis (Crab-eating macaque).